We begin with the raw amino-acid sequence, 298 residues long: Lipoyl synthase (298 aa).

Cys40, Cys45, Cys51, Cys67, Cys71, Cys74, and Ser280 together coordinate [4Fe-4S] cluster. A Radical SAM core domain is found at 53–269 (AVRKTATFMI…KEIALSKGFS (217 aa)).

This sequence belongs to the radical SAM superfamily. Lipoyl synthase family. Requires [4Fe-4S] cluster as cofactor.

Its subcellular location is the cytoplasm. The catalysed reaction is [[Fe-S] cluster scaffold protein carrying a second [4Fe-4S](2+) cluster] + N(6)-octanoyl-L-lysyl-[protein] + 2 oxidized [2Fe-2S]-[ferredoxin] + 2 S-adenosyl-L-methionine + 4 H(+) = [[Fe-S] cluster scaffold protein] + N(6)-[(R)-dihydrolipoyl]-L-lysyl-[protein] + 4 Fe(3+) + 2 hydrogen sulfide + 2 5'-deoxyadenosine + 2 L-methionine + 2 reduced [2Fe-2S]-[ferredoxin]. It functions in the pathway protein modification; protein lipoylation via endogenous pathway; protein N(6)-(lipoyl)lysine from octanoyl-[acyl-carrier-protein]. Catalyzes the radical-mediated insertion of two sulfur atoms into the C-6 and C-8 positions of the octanoyl moiety bound to the lipoyl domains of lipoate-dependent enzymes, thereby converting the octanoylated domains into lipoylated derivatives. The protein is Lipoyl synthase of Bacillus mycoides (strain KBAB4) (Bacillus weihenstephanensis).